We begin with the raw amino-acid sequence, 541 residues long: Chaperonin GroEL 2 (541 aa).

ATP-binding positions include threonine 29 to proline 32, aspartate 86 to threonine 90, glycine 413, asparagine 477 to alanine 479, and aspartate 493.

The protein belongs to the chaperonin (HSP60) family. As to quaternary structure, forms a cylinder of 14 subunits composed of two heptameric rings stacked back-to-back. Interacts with the co-chaperonin GroES.

It localises to the cytoplasm. The enzyme catalyses ATP + H2O + a folded polypeptide = ADP + phosphate + an unfolded polypeptide.. Functionally, together with its co-chaperonin GroES, plays an essential role in assisting protein folding. The GroEL-GroES system forms a nano-cage that allows encapsulation of the non-native substrate proteins and provides a physical environment optimized to promote and accelerate protein folding. In Nocardioides sp. (strain ATCC BAA-499 / JS614), this protein is Chaperonin GroEL 2.